A 496-amino-acid chain; its full sequence is Lysine--tRNA ligase (496 aa).

Residues E409 and E416 each coordinate Mg(2+).

This sequence belongs to the class-II aminoacyl-tRNA synthetase family. In terms of assembly, homodimer. Requires Mg(2+) as cofactor.

Its subcellular location is the cytoplasm. The enzyme catalyses tRNA(Lys) + L-lysine + ATP = L-lysyl-tRNA(Lys) + AMP + diphosphate. In Streptococcus thermophilus (strain ATCC BAA-491 / LMD-9), this protein is Lysine--tRNA ligase.